Reading from the N-terminus, the 470-residue chain is Poly(A) polymerase catalytic subunit (470 aa).

Active-site residues include Asp192 and Asp194.

Belongs to the poxviridae poly(A) polymerase catalytic subunit family. Heterodimer of a large (catalytic) subunit and a small (regulatory) subunit.

The enzyme catalyses RNA(n) + ATP = RNA(n)-3'-adenine ribonucleotide + diphosphate. In terms of biological role, polymerase that creates the 3'-poly(A) tail of mRNA's. The protein is Poly(A) polymerase catalytic subunit (PAPL) of Molluscum contagiosum virus subtype 1 (MOCV).